The chain runs to 70 residues: ATP synthase subunit c (70 aa).

2 consecutive transmembrane segments (helical) span residues 4–24 and 45–65; these read IAAA…NGLI and LMFI…VIAF.

This sequence belongs to the ATPase C chain family. As to quaternary structure, F-type ATPases have 2 components, F(1) - the catalytic core - and F(0) - the membrane proton channel. F(1) has five subunits: alpha(3), beta(3), gamma(1), delta(1), epsilon(1). F(0) has three main subunits: a(1), b(2) and c(10-14). The alpha and beta chains form an alternating ring which encloses part of the gamma chain. F(1) is attached to F(0) by a central stalk formed by the gamma and epsilon chains, while a peripheral stalk is formed by the delta and b chains.

It localises to the cell membrane. Functionally, f(1)F(0) ATP synthase produces ATP from ADP in the presence of a proton or sodium gradient. F-type ATPases consist of two structural domains, F(1) containing the extramembraneous catalytic core and F(0) containing the membrane proton channel, linked together by a central stalk and a peripheral stalk. During catalysis, ATP synthesis in the catalytic domain of F(1) is coupled via a rotary mechanism of the central stalk subunits to proton translocation. In terms of biological role, key component of the F(0) channel; it plays a direct role in translocation across the membrane. A homomeric c-ring of between 10-14 subunits forms the central stalk rotor element with the F(1) delta and epsilon subunits. The chain is ATP synthase subunit c from Bacillus licheniformis (strain ATCC 14580 / DSM 13 / JCM 2505 / CCUG 7422 / NBRC 12200 / NCIMB 9375 / NCTC 10341 / NRRL NRS-1264 / Gibson 46).